A 270-amino-acid chain; its full sequence is Glucosamine-6-phosphate deaminase (270 aa).

Catalysis depends on D72, which acts as the Proton acceptor; for enolization step. D141 (for ring-opening step) is an active-site residue. The active-site Proton acceptor; for ring-opening step is H143. Catalysis depends on E148, which acts as the For ring-opening step.

This sequence belongs to the glucosamine/galactosamine-6-phosphate isomerase family. NagB subfamily.

The catalysed reaction is alpha-D-glucosamine 6-phosphate + H2O = beta-D-fructose 6-phosphate + NH4(+). The protein operates within amino-sugar metabolism; N-acetylneuraminate degradation; D-fructose 6-phosphate from N-acetylneuraminate: step 5/5. With respect to regulation, allosterically activated by N-acetylglucosamine 6-phosphate (GlcNAc6P). Functionally, catalyzes the reversible isomerization-deamination of glucosamine 6-phosphate (GlcN6P) to form fructose 6-phosphate (Fru6P) and ammonium ion. This Treponema denticola (strain ATCC 35405 / DSM 14222 / CIP 103919 / JCM 8153 / KCTC 15104) protein is Glucosamine-6-phosphate deaminase.